The primary structure comprises 513 residues: MAIKQNGRAHLSSDIDFIRTPEAPVDSLSTGKNPGVPSTNSPAIKNAPLPADGPGYEQWSNGFLVAALLGIPQWLSWKLGGGLKTAIFLSIFTTIPVLAVIWTVMSRYSPRINHDVKLPGRPVEFYLTFKSDSHRARWTGTHKIPMATFFELYFTGQVDLNGDALEVFEYRHDWATFNFTSETFRYILFTFFPDVVLHLRSQDEEQVRTNYDSGNDHYAWFLGPRMIYTSGIISDPTREETLEEMQDNKLAIVCEKISLKEGDTLLDIGCGWGTLAKFASLNYGAKVTGVTLARNQVQWGNDGLQQAGIPEEQSRLLCCDYRDIPEDQKFNKITQLEMAEHVGVRRLTGFFRQCYDMLENDGSMYVQVSGFRKAWQYEDFIWGLFLNKYIFPGADASTPLSYYVGCLESAGFEVKSVDTIGVHYSGTLWRWYRNWLGNADKVKAKYGVRWFRIWEIFLAYSTIGSRQGSATCYQIVVVKNLNSNHRIDGVYSQYGLHGALAAAKAAGKNMLPK.

2 helical membrane passes run 63–83 (FLVAALLGIPQWLSWKLGGGL) and 85–105 (TAIFLSIFTTIPVLAVIWTVM). S-adenosyl-L-methionine is bound by residues 228–229 (YT), 265–273 (LLDIGCGWG), 291–296 (TLARNQ), and 321–322 (YR).

The protein belongs to the CFA/CMAS family.

The protein resides in the membrane. It catalyses the reaction a (4E,8E)-4-sphinga-4,8-dienine ceramide + S-adenosyl-L-methionine = a 9-methyl-(4E,8E)-sphinga-4,8-dienine ceramide + S-adenosyl-L-homocysteine + H(+). Its pathway is lipid metabolism; sphingolipid metabolism. Its function is as follows. Catalyzes methylation of the sphingoid base component of glucosylceramides (GluCers) at the C9-position. Sphingolipid C9-methylation requires 4,8-desaturated ceramides as substrates. Glucosylceramides play important roles in the growth, differentiation and pathogenicity. The methyl group at the C9-position distinguishes fungal glucosylceramides from those of plants and animals, and may thus play a role in host-pathogen interactions enabling the host to recognize the fungal attack and initiate specific defense responses. However, C-9 methylation of GlcCers is not essential for the sensitivity of F.graminearum to plant defensins MsDef1 and RsAFP2. The polypeptide is Sphingolipid C9-methyltransferase 1 (Gibberella zeae (strain ATCC MYA-4620 / CBS 123657 / FGSC 9075 / NRRL 31084 / PH-1) (Wheat head blight fungus)).